The primary structure comprises 87 residues: Large ribosomal subunit protein bL27 (87 aa).

The segment at 1-21 (MAHKKAGGSSRNGRDSESKRL) is disordered.

This sequence belongs to the bacterial ribosomal protein bL27 family.

This Paraburkholderia xenovorans (strain LB400) protein is Large ribosomal subunit protein bL27.